The primary structure comprises 357 residues: 3-isopropylmalate dehydrogenase (357 aa).

Residue 77 to 90 (GPKWDNLEGSKRPE) coordinates NAD(+). 4 residues coordinate substrate: arginine 97, arginine 107, arginine 136, and aspartate 224. Positions 224, 248, and 252 each coordinate Mg(2+). 282–294 (GSAPDIAGLDIAN) is an NAD(+) binding site.

It belongs to the isocitrate and isopropylmalate dehydrogenases family. LeuB type 1 subfamily. In terms of assembly, homodimer. Mg(2+) is required as a cofactor. The cofactor is Mn(2+).

It is found in the cytoplasm. It carries out the reaction (2R,3S)-3-isopropylmalate + NAD(+) = 4-methyl-2-oxopentanoate + CO2 + NADH. It functions in the pathway amino-acid biosynthesis; L-leucine biosynthesis; L-leucine from 3-methyl-2-oxobutanoate: step 3/4. Functionally, catalyzes the oxidation of 3-carboxy-2-hydroxy-4-methylpentanoate (3-isopropylmalate) to 3-carboxy-4-methyl-2-oxopentanoate. The product decarboxylates to 4-methyl-2 oxopentanoate. This is 3-isopropylmalate dehydrogenase (leuB) from Clostridium pasteurianum.